Reading from the N-terminus, the 605-residue chain is F-box/WD repeat-containing protein pof1 (605 aa).

Positions 107 to 153 (LDFLSLLPVEISFRILSFLDARSLCQAAQVSKHWKELADDDVIWHRM) constitute an F-box domain. Basic and acidic residues predominate over residues 195-212 (GVDQAHESSPVKKAKLDD). The interval 195 to 231 (GVDQAHESSPVKKAKLDDYPTSSNEETISSVKPPSPN) is disordered. Residues 214-231 (PTSSNEETISSVKPPSPN) are compositionally biased toward polar residues. Phosphoserine occurs at positions 229 and 232. WD repeat units follow at residues 271–299 (GHSDGVMCLQLVRNILASGSYDATIRLWN), 311–339 (GHSSGVTCLQFDQCKLISGSMDKTIRIWN), 350–379 (HGHTDSVLCLTFDSTLLVSGSADCTVKLWH), 390–420 (GHTGPVNSVRIIRDRGLVLSGSDDSTIKIWS), 432–460 (AHIGPVQSLALADSRLFSCSLDGTIKQWD), 472–500 (GHIEGVWEIAADHLRLISGAHDGVVKVWE), and 510–538 (NHSEPVTSVALGDCEVVSGSEDGKIYLWL).

In terms of assembly, a part of the E3 ubiquitin ligase Skp1-Cullin-1-F-box (SCF) complex. Interacts with cul1, skp1 and phosphorylated zip1.

Its subcellular location is the nucleus. Probably recognizes and binds to some phosphorylated proteins and promotes their ubiquitination and degradation. Required for the inactivation of zip1 via ubiquitination. The protein is F-box/WD repeat-containing protein pof1 (pof1) of Schizosaccharomyces pombe (strain 972 / ATCC 24843) (Fission yeast).